A 189-amino-acid polypeptide reads, in one-letter code: Methylated-DNA--protein-cysteine methyltransferase (189 aa).

Tyrosine 128 and arginine 142 together coordinate DNA. Cysteine 159 functions as the Nucleophile; methyl group acceptor in the catalytic mechanism. Serine 165 contributes to the DNA binding site.

It belongs to the MGMT family.

It localises to the nucleus. The catalysed reaction is a 6-O-methyl-2'-deoxyguanosine in DNA + L-cysteinyl-[protein] = S-methyl-L-cysteinyl-[protein] + a 2'-deoxyguanosine in DNA. It carries out the reaction a 4-O-methyl-thymidine in DNA + L-cysteinyl-[protein] = a thymidine in DNA + S-methyl-L-cysteinyl-[protein]. In terms of biological role, involved in the cellular defense against the biological effects of O6-methylguanine (O6-MeG) and O4-methylthymine (O4-MeT) in DNA. Repairs the methylated nucleobase in DNA by stoichiometrically transferring the methyl group to a cysteine residue in the enzyme. This is a suicide reaction: the enzyme is irreversibly inactivated. The polypeptide is Methylated-DNA--protein-cysteine methyltransferase (MGT1) (Kluyveromyces lactis (strain ATCC 8585 / CBS 2359 / DSM 70799 / NBRC 1267 / NRRL Y-1140 / WM37) (Yeast)).